The sequence spans 441 residues: Zinc finger protein ZIC 3 (441 aa).

A C2H2-type 1; atypical zinc finger spans residues 222–257; the sequence is LSCKWLEESTMNHPQKTCDRTFSSMHELVTHMTMEH. The C2H2-type 2; atypical zinc-finger motif lies at 266–293; sequence HICYWEECPRGGKSFKAKYKLVNHIRVH. C2H2-type zinc fingers lie at residues 299–323, 329–353, and 359–381; these read FPCP…KRTH, FKCE…MHVH, and YICK…MKVH. Positions 375-441 are disordered; the sequence is RKHMKVHESQ…LPPNFNEWYV (67 aa). Residues 383-399 show a composition bias toward low complexity; it reads SQGSDSSPAASSGYESA. The segment covering 406 to 429 has biased composition (polar residues); it reads SANSEEPSKNSSATHQTNNNSHNT.

Belongs to the GLI C2H2-type zinc-finger protein family. First detected at early gastrula (stage 10.25) in the dorsal lip and prospective neural plate. Also expressed in the mesoderm at early gastrulation, with expression strongest on the dorsal side. Mesodermal expression continues at stage 12 but is hardly detectable after stage 14. As gastrulation proceeds, expression decreases in the dorsal lip and increases in the prospective neural plate. At the neural plate stage (stage 14), expressed strongly in the prospective mesencephalon and anterior rhombencephalon, after which expression becomes stronger in the anterior neural folds. At early tailbud stage (stage 20), expression becomes restricted to the dorsal region of forebrain, midbrain and hindbrain, and weakly to the dorsal trunk. After mid-tailbud stage, expression decreases in the diencephalon, appears in the lateral mesoderm of the tailbud region and becomes restricted in the dorsal part of the neural tube.

It is found in the nucleus. It localises to the cytoplasm. Its function is as follows. Probably acts as a transcriptional activator. May bind to the minimal GLI-consensus sequence 5'-GGGTGGTC-3'. Can determine the ectodermal cell fate and promote the earliest step of neural and neural crest development. Involved in establishing left-right asymmetry in the embryo. The protein is Zinc finger protein ZIC 3 (zic3) of Xenopus laevis (African clawed frog).